Reading from the N-terminus, the 334-residue chain is Atypical chemokine receptor 1 (334 aa).

The Extracellular segment spans residues M1–P61. Residues N16, N26, and N32 are each glycosylated (N-linked (GlcNAc...) asparagine). Intrachain disulfides connect C49–C274 and C127–C193. Residues F62–L82 form a helical membrane-spanning segment. The Cytoplasmic portion of the chain corresponds to R83 to S93. Residues W94 to L114 traverse the membrane as a helical segment. At A115–C127 the chain is on the extracellular side. A helical transmembrane segment spans residues N128–L151. Topologically, residues N152 to T164 are cytoplasmic. A helical transmembrane segment spans residues L165 to A185. At S186–K205 the chain is on the extracellular side. The chain crosses the membrane as a helical span at residues Y206 to A226. The Cytoplasmic portion of the chain corresponds to K227–S242. Residues V243–L263 traverse the membrane as a helical segment. Residues V264 to N285 lie on the Extracellular side of the membrane. The N-linked (GlcNAc...) asparagine glycan is linked to N285. Residues V286 to C306 form a helical membrane-spanning segment. The Cytoplasmic segment spans residues H307–S334.

This sequence belongs to the G-protein coupled receptor 1 family. Atypical chemokine receptor subfamily. As to expression, expressed in liver and brain.

It localises to the early endosome. Its subcellular location is the recycling endosome. The protein resides in the membrane. Its function is as follows. Atypical chemokine receptor that controls chemokine levels and localization via high-affinity chemokine binding that is uncoupled from classic ligand-driven signal transduction cascades, resulting instead in chemokine sequestration, degradation, or transcytosis. Also known as interceptor (internalizing receptor) or chemokine-scavenging receptor or chemokine decoy receptor. Has a promiscuous chemokine-binding profile, interacting with inflammatory chemokines of both the CXC and the CC subfamilies but not with homeostatic chemokines. Acts as a receptor for chemokines including CCL2, CCL5, CCL7, CCL11, CCL13, CCL14, CCL17, CXCL5, CXCL6, IL8/CXCL8, CXCL11, GRO, RANTES, MCP-1 and TARC. May regulate chemokine bioavailability and, consequently, leukocyte recruitment through two distinct mechanisms: when expressed in endothelial cells, it sustains the abluminal to luminal transcytosis of tissue-derived chemokines and their subsequent presentation to circulating leukocytes; when expressed in erythrocytes, serves as blood reservoir of cognate chemokines but also as a chemokine sink, buffering potential surges in plasma chemokine levels. Functionally, (Microbial infection) Acts as a receptor for the malaria parasite Plasmodium yoelii in mature erythrocytes but not reticulocytes. This is Atypical chemokine receptor 1 (Ackr1) from Mus musculus (Mouse).